The following is a 150-amino-acid chain: Large ribosomal subunit protein bL9 (150 aa).

The protein belongs to the bacterial ribosomal protein bL9 family.

Binds to the 23S rRNA. The chain is Large ribosomal subunit protein bL9 from Neisseria meningitidis serogroup A / serotype 4A (strain DSM 15465 / Z2491).